The following is a 188-amino-acid chain: ATP synthase subunit b, chloroplastic (188 aa).

A helical transmembrane segment spans residues 35–57; it reads LINLAVVIGVLVYFGKGVLTTLL.

Belongs to the ATPase B chain family. In terms of assembly, F-type ATPases have 2 components, F(1) - the catalytic core - and F(0) - the membrane proton channel. F(1) has five subunits: alpha(3), beta(3), gamma(1), delta(1), epsilon(1). F(0) has four main subunits: a(1), b(1), b'(1) and c(10-14). The alpha and beta chains form an alternating ring which encloses part of the gamma chain. F(1) is attached to F(0) by a central stalk formed by the gamma and epsilon chains, while a peripheral stalk is formed by the delta, b and b' chains.

The protein localises to the plastid. It is found in the chloroplast thylakoid membrane. F(1)F(0) ATP synthase produces ATP from ADP in the presence of a proton or sodium gradient. F-type ATPases consist of two structural domains, F(1) containing the extramembraneous catalytic core and F(0) containing the membrane proton channel, linked together by a central stalk and a peripheral stalk. During catalysis, ATP synthesis in the catalytic domain of F(1) is coupled via a rotary mechanism of the central stalk subunits to proton translocation. Functionally, component of the F(0) channel, it forms part of the peripheral stalk, linking F(1) to F(0). The protein is ATP synthase subunit b, chloroplastic of Zygnema circumcarinatum (Green alga).